The following is a 252-amino-acid chain: Carboxy-S-adenosyl-L-methionine synthase (252 aa).

S-adenosyl-L-methionine contacts are provided by residues Y45, 70-72, 95-96, 127-128, N142, and R209; these read GCS, DN, and DI.

This sequence belongs to the class I-like SAM-binding methyltransferase superfamily. Cx-SAM synthase family. As to quaternary structure, homodimer.

It catalyses the reaction prephenate + S-adenosyl-L-methionine = carboxy-S-adenosyl-L-methionine + 3-phenylpyruvate + H2O. Functionally, catalyzes the conversion of S-adenosyl-L-methionine (SAM) to carboxy-S-adenosyl-L-methionine (Cx-SAM). This is Carboxy-S-adenosyl-L-methionine synthase from Pseudomonas paraeruginosa (strain DSM 24068 / PA7) (Pseudomonas aeruginosa (strain PA7)).